The chain runs to 154 residues: MGLSDAEWQLVLNVWGKVEADIPGHGQDVLIRLFKGHPETLEKFDRFKHLKTEDEMKASEDLKKHGTTVLTALGGILKKKGQHEAEIQPLAQSHATKHKIPVKYLEFISEAIIQVIQSKHSGDFGADAQGAMSKALELFRNDIAAKYKELGFQG.

In terms of domain architecture, Globin spans 2-148; that stretch reads GLSDAEWQLV…FRNDIAAKYK (147 aa). Serine 4 carries the post-translational modification Phosphoserine. Histidine 65 is a nitrite binding site. Histidine 65 contributes to the O2 binding site. At threonine 68 the chain carries Phosphothreonine. Histidine 94 provides a ligand contact to heme b.

This sequence belongs to the globin family. As to quaternary structure, monomeric.

It localises to the cytoplasm. The protein localises to the sarcoplasm. It carries out the reaction Fe(III)-heme b-[protein] + nitric oxide + H2O = Fe(II)-heme b-[protein] + nitrite + 2 H(+). The catalysed reaction is H2O2 + AH2 = A + 2 H2O. Its function is as follows. Monomeric heme protein which primary function is to store oxygen and facilitate its diffusion within muscle tissues. Reversibly binds oxygen through a pentacoordinated heme iron and enables its timely and efficient release as needed during periods of heightened demand. Depending on the oxidative conditions of tissues and cells, and in addition to its ability to bind oxygen, it also has a nitrite reductase activity whereby it regulates the production of bioactive nitric oxide. Under stress conditions, like hypoxia and anoxia, it also protects cells against reactive oxygen species thanks to its pseudoperoxidase activity. The polypeptide is Myoglobin (MB) (Orycteropus afer (Aardvark)).